Reading from the N-terminus, the 157-residue chain is Phosphopantetheine adenylyltransferase (157 aa).

Thr8 contacts substrate. Residues 8–9 (TF) and His16 contribute to the ATP site. Lys40, Thr72, and Arg86 together coordinate substrate. Residues 87 to 89 (GLR), Glu97, and 122 to 128 (YSFLSSS) each bind ATP.

The protein belongs to the bacterial CoaD family. In terms of assembly, homohexamer. It depends on Mg(2+) as a cofactor.

The protein resides in the cytoplasm. The catalysed reaction is (R)-4'-phosphopantetheine + ATP + H(+) = 3'-dephospho-CoA + diphosphate. The protein operates within cofactor biosynthesis; coenzyme A biosynthesis; CoA from (R)-pantothenate: step 4/5. Its function is as follows. Reversibly transfers an adenylyl group from ATP to 4'-phosphopantetheine, yielding dephospho-CoA (dPCoA) and pyrophosphate. The protein is Phosphopantetheine adenylyltransferase of Prochlorococcus marinus (strain MIT 9215).